A 284-amino-acid polypeptide reads, in one-letter code: Large ribosomal subunit protein uL2 (284 aa).

The tract at residues 232–284 (RGTAMNPVDHPHGGGEGRHNGYIPRTPWGKVTKGLKTRDKRKSNKWIVKDRRK) is disordered. A compositionally biased stretch (basic and acidic residues) spans 240–250 (DHPHGGGEGRH). Positions 264 to 284 (KGLKTRDKRKSNKWIVKDRRK) are enriched in basic residues.

It belongs to the universal ribosomal protein uL2 family. As to quaternary structure, part of the 50S ribosomal subunit. Forms a bridge to the 30S subunit in the 70S ribosome.

Its function is as follows. One of the primary rRNA binding proteins. Required for association of the 30S and 50S subunits to form the 70S ribosome, for tRNA binding and peptide bond formation. It has been suggested to have peptidyltransferase activity; this is somewhat controversial. Makes several contacts with the 16S rRNA in the 70S ribosome. This Chlamydia felis (strain Fe/C-56) (Chlamydophila felis) protein is Large ribosomal subunit protein uL2.